The chain runs to 569 residues: GATOR1 complex protein NPRL3 (569 aa).

2 disordered regions span residues 27–60 (PFQR…DQDG) and 441–476 (TPNA…SGDS). Polar residues-rich tracts occupy residues 34–52 (HPAS…NNTG) and 441–468 (TPNA…NSSA). Residue serine 476 is modified to Phosphoserine.

The protein belongs to the NPR3 family. In terms of assembly, within the GATOR complex, component of the GATOR1 subcomplex, made of DEPDC5, NPRL2 and NPRL3. GATOR1 mediates the strong interaction of the GATOR complex with small GTPases Rag (RagA/RRAGA, RagB/RRAGB, RagC/RRAGC and/or RagD/RRAGD) heterodimers. GATOR1 interacts with GPR155/LYCHOS; interaction takes place in presence of cholesterol and prevents interaction between GATOR1 and KICSTOR.

Its subcellular location is the lysosome membrane. In terms of biological role, as a component of the GATOR1 complex functions as an inhibitor of the amino acid-sensing branch of the mTORC1 pathway. In response to amino acid depletion, the GATOR1 complex has GTPase activating protein (GAP) activity and strongly increases GTP hydrolysis by RagA/RRAGA (or RagB/RRAGB) within heterodimeric Rag complexes, thereby turning them into their inactive GDP-bound form, releasing mTORC1 from lysosomal surface and inhibiting mTORC1 signaling. In the presence of abundant amino acids, the GATOR1 complex is negatively regulated by GATOR2, the other GATOR subcomplex, in this amino acid-sensing branch of the TORC1 pathway. This Mus musculus (Mouse) protein is GATOR1 complex protein NPRL3.